The sequence spans 242 residues: DNA repair protein RecO (242 aa).

It belongs to the RecO family. In terms of assembly, monomer.

Its function is as follows. Involved in DNA repair and RecF pathway recombination. This Shigella flexneri protein is DNA repair protein RecO.